The chain runs to 379 residues: RING finger protein 215 (379 aa).

Disordered regions lie at residues M1 to P21 and A44 to R63. Over M1–P24 the chain is Cytoplasmic. Residues L25–A45 traverse the membrane as a helical segment. The Extracellular segment spans residues D46–P252. N188 carries N-linked (GlcNAc...) asparagine glycosylation. A helical transmembrane segment spans residues L253–V273. Topologically, residues Q274–D379 are cytoplasmic. The RING-type; atypical zinc-finger motif lies at C327 to K368.

Its subcellular location is the membrane. The protein is RING finger protein 215 (Rnf215) of Mus musculus (Mouse).